The chain runs to 333 residues: Glycerol-3-phosphate dehydrogenase [NAD(P)+] (333 aa).

3 residues coordinate NADPH: Trp13, Lys33, and Lys108. Residues Lys108 and Gly138 each contribute to the sn-glycerol 3-phosphate site. Ser142 is an NADPH binding site. Positions 193, 246, 256, 257, and 258 each coordinate sn-glycerol 3-phosphate. Residue Lys193 is the Proton acceptor of the active site. Arg257 contributes to the NADPH binding site. Positions 281 and 283 each coordinate NADPH.

The protein belongs to the NAD-dependent glycerol-3-phosphate dehydrogenase family.

Its subcellular location is the cytoplasm. The enzyme catalyses sn-glycerol 3-phosphate + NAD(+) = dihydroxyacetone phosphate + NADH + H(+). It carries out the reaction sn-glycerol 3-phosphate + NADP(+) = dihydroxyacetone phosphate + NADPH + H(+). It participates in membrane lipid metabolism; glycerophospholipid metabolism. Functionally, catalyzes the reduction of the glycolytic intermediate dihydroxyacetone phosphate (DHAP) to sn-glycerol 3-phosphate (G3P), the key precursor for phospholipid synthesis. This Bifidobacterium longum (strain NCC 2705) protein is Glycerol-3-phosphate dehydrogenase [NAD(P)+].